The sequence spans 125 residues: MVLLSFSRYCDTITMDYEENSIEGTSGYVEPITPMISKGDSGIIAISPLCDHYNNHMRIDSLTTCSDEEIIESLYQNIFSIVLCLQTEESGYGSHTPVSAACPGAPMKLTKLSRNIDPGFQRKLF.

Functionally, probable cyclin-dependent protein kinase (CDK) inhibitor that functions as a repressor of mitosis in the endoreduplication cell cycle. The chain is Cyclin-dependent protein kinase inhibitor SMR16 from Arabidopsis thaliana (Mouse-ear cress).